A 456-amino-acid chain; its full sequence is Serine--tRNA ligase (456 aa).

The interval 49–69 is disordered; the sequence is HERNEVSSTIGELKQAGEEEA. Residue 241-243 coordinates L-serine; it reads TAE. Residues 272–274 and Val-288 contribute to the ATP site; that span reads RQE. Glu-295 contacts L-serine. 368 to 371 is an ATP binding site; the sequence is EVSS. Ser-404 contacts L-serine.

This sequence belongs to the class-II aminoacyl-tRNA synthetase family. Type-1 seryl-tRNA synthetase subfamily. In terms of assembly, homodimer. The tRNA molecule binds across the dimer.

It is found in the cytoplasm. It catalyses the reaction tRNA(Ser) + L-serine + ATP = L-seryl-tRNA(Ser) + AMP + diphosphate + H(+). The enzyme catalyses tRNA(Sec) + L-serine + ATP = L-seryl-tRNA(Sec) + AMP + diphosphate + H(+). The protein operates within aminoacyl-tRNA biosynthesis; selenocysteinyl-tRNA(Sec) biosynthesis; L-seryl-tRNA(Sec) from L-serine and tRNA(Sec): step 1/1. In terms of biological role, catalyzes the attachment of serine to tRNA(Ser). Is also able to aminoacylate tRNA(Sec) with serine, to form the misacylated tRNA L-seryl-tRNA(Sec), which will be further converted into selenocysteinyl-tRNA(Sec). The protein is Serine--tRNA ligase of Halorubrum lacusprofundi (strain ATCC 49239 / DSM 5036 / JCM 8891 / ACAM 34).